We begin with the raw amino-acid sequence, 111 residues long: MKKSYRVKKEKDFKALFDAGHSVANRKFVVYCLDRNLPHFRVGLSVSKHLGNAVTRNRVKRRLRHALMDMSSQLEHQDFVVIARKGVEDLSYQDIYSNLVHVLKIAKLYKD.

Belongs to the RnpA family. As to quaternary structure, consists of a catalytic RNA component (M1 or rnpB) and a protein subunit.

It catalyses the reaction Endonucleolytic cleavage of RNA, removing 5'-extranucleotides from tRNA precursor.. Its function is as follows. RNaseP catalyzes the removal of the 5'-leader sequence from pre-tRNA to produce the mature 5'-terminus. It can also cleave other RNA substrates such as 4.5S RNA. The protein component plays an auxiliary but essential role in vivo by binding to the 5'-leader sequence and broadening the substrate specificity of the ribozyme. The polypeptide is Ribonuclease P protein component (Streptococcus thermophilus (strain CNRZ 1066)).